Consider the following 242-residue polypeptide: Transcriptional regulatory protein GltR (242 aa).

A Response regulatory domain is found at serine 7–leucine 123. At aspartate 56 the chain carries 4-aspartylphosphate. Residues glycine 134–alanine 234 constitute a DNA-binding region (ompR/PhoB-type).

In terms of processing, phosphorylated by GtrS.

The protein localises to the cytoplasm. Phosphorylation of GltR induces its dissociation from DNA leading to transcriptional activation. Functionally, member of the two-component regulatory system GtrS/GltR involved in the regulation of glucose metabolism and transport, as well as regulation of the exotoxin A gene expression. GltR controls the transcription of genes involved in glucose metabolism (glk and edd/gap-1) and transport (oprB) as well as the expression of toxA that encodes exotoxin A, the primary virulence factor. Acts as a repressor that is released from its target operators upon phosphorylation. Its function is as follows. Contributes to modulation of the type III secretion system (T3SS) in response to host cells via the regulation of the OprB transport system. This chain is Transcriptional regulatory protein GltR, found in Pseudomonas aeruginosa (strain ATCC 15692 / DSM 22644 / CIP 104116 / JCM 14847 / LMG 12228 / 1C / PRS 101 / PAO1).